Here is a 478-residue protein sequence, read N- to C-terminus: tRNA modification GTPase MnmE (478 aa).

(6S)-5-formyl-5,6,7,8-tetrahydrofolate contacts are provided by arginine 25, glutamate 82, and lysine 135. A TrmE-type G domain is found at 231 to 400 (GIKVVIAGQP…LRQRLLQVVG (170 aa)). Asparagine 241 serves as a coordination point for K(+). Residues 241–246 (NAGKSS), 260–266 (TPIAGTT), and 285–288 (DTAG) each bind GTP. Serine 245 contributes to the Mg(2+) binding site. Positions 260, 262, and 265 each coordinate K(+). Threonine 266 is a binding site for Mg(2+). Lysine 478 contributes to the (6S)-5-formyl-5,6,7,8-tetrahydrofolate binding site.

The protein belongs to the TRAFAC class TrmE-Era-EngA-EngB-Septin-like GTPase superfamily. TrmE GTPase family. As to quaternary structure, homodimer. Heterotetramer of two MnmE and two MnmG subunits. K(+) is required as a cofactor.

The protein localises to the cytoplasm. In terms of biological role, exhibits a very high intrinsic GTPase hydrolysis rate. Involved in the addition of a carboxymethylaminomethyl (cmnm) group at the wobble position (U34) of certain tRNAs, forming tRNA-cmnm(5)s(2)U34. This is tRNA modification GTPase MnmE from Polaromonas sp. (strain JS666 / ATCC BAA-500).